The chain runs to 171 residues: Endoribonuclease YbeY (171 aa).

3 residues coordinate Zn(2+): H130, H134, and H140.

This sequence belongs to the endoribonuclease YbeY family. Zn(2+) is required as a cofactor.

Its subcellular location is the cytoplasm. Single strand-specific metallo-endoribonuclease involved in late-stage 70S ribosome quality control and in maturation of the 3' terminus of the 16S rRNA. This chain is Endoribonuclease YbeY, found in Neisseria meningitidis serogroup C / serotype 2a (strain ATCC 700532 / DSM 15464 / FAM18).